Here is a 511-residue protein sequence, read N- to C-terminus: Bifunctional purine biosynthesis protein PurH (511 aa).

One can recognise an MGS-like domain in the interval 1–147 (MIQIKRALIS…KNYKHTLVLT (147 aa)).

Belongs to the PurH family.

It catalyses the reaction (6R)-10-formyltetrahydrofolate + 5-amino-1-(5-phospho-beta-D-ribosyl)imidazole-4-carboxamide = 5-formamido-1-(5-phospho-D-ribosyl)imidazole-4-carboxamide + (6S)-5,6,7,8-tetrahydrofolate. The catalysed reaction is IMP + H2O = 5-formamido-1-(5-phospho-D-ribosyl)imidazole-4-carboxamide. Its pathway is purine metabolism; IMP biosynthesis via de novo pathway; 5-formamido-1-(5-phospho-D-ribosyl)imidazole-4-carboxamide from 5-amino-1-(5-phospho-D-ribosyl)imidazole-4-carboxamide (10-formyl THF route): step 1/1. It functions in the pathway purine metabolism; IMP biosynthesis via de novo pathway; IMP from 5-formamido-1-(5-phospho-D-ribosyl)imidazole-4-carboxamide: step 1/1. This chain is Bifunctional purine biosynthesis protein PurH, found in Leptospira borgpetersenii serovar Hardjo-bovis (strain JB197).